The chain runs to 186 residues: Ribosome-recycling factor (186 aa).

Belongs to the RRF family.

Its subcellular location is the cytoplasm. Its function is as follows. Responsible for the release of ribosomes from messenger RNA at the termination of protein biosynthesis. May increase the efficiency of translation by recycling ribosomes from one round of translation to another. The chain is Ribosome-recycling factor from Cupriavidus taiwanensis (strain DSM 17343 / BCRC 17206 / CCUG 44338 / CIP 107171 / LMG 19424 / R1) (Ralstonia taiwanensis (strain LMG 19424)).